The chain runs to 684 residues: Glycine--tRNA ligase beta subunit (684 aa).

Belongs to the class-II aminoacyl-tRNA synthetase family. As to quaternary structure, tetramer of two alpha and two beta subunits.

The protein resides in the cytoplasm. It carries out the reaction tRNA(Gly) + glycine + ATP = glycyl-tRNA(Gly) + AMP + diphosphate. In Pseudomonas fluorescens (strain ATCC BAA-477 / NRRL B-23932 / Pf-5), this protein is Glycine--tRNA ligase beta subunit.